Reading from the N-terminus, the 397-residue chain is Lysophospholipid transporter LplT (397 aa).

The Periplasmic segment spans residues 1-17 (MSESVHTNTSLWSKGMK). Residues 18-38 (AVIVAQFLSAFGDNALLFATL) form a helical membrane-spanning segment. The Cytoplasmic segment spans residues 39–52 (ALLKAQFYPEWSQP). A helical transmembrane segment spans residues 53-73 (ILQMVFVGAYILFAPFVGQVA). Residues 74–90 (DSFAKGRVMMFANGLKL) lie on the Periplasmic side of the membrane. Residues 91-111 (LGAASICFGINPFLGYTLVGV) form a helical membrane-spanning segment. At 112–144 (GAAAYSPAKYGILGELTTGSKLVKANGLMEAST) the chain is on the cytoplasmic side. The helical transmembrane segment at 145 to 165 (IAAILLGSVAGGVLADWHILV) threads the bilayer. Ala166 is a topological domain (periplasmic). A helical transmembrane segment spans residues 167–187 (LVACALAYGGAVVANIYIPKL). At 188–226 (AAARPGQSWNLISMTRSFLNACTSLWRNGETRFSLVGTS) the chain is on the cytoplasmic side. A helical membrane pass occupies residues 227–247 (LFWGAGVTLRFLLVLWVPVAL). Residues 248–256 (GITDNATPT) lie on the Periplasmic side of the membrane. A helical membrane pass occupies residues 257 to 277 (YLNAMVAIGIVVGAGAAAKLV). Over 278–280 (TLE) the chain is Cytoplasmic. A helical transmembrane segment spans residues 281 to 301 (TVSRCMPAGILIGVVVLIFSL). Residues 302–304 (QHE) are Periplasmic-facing. A helical transmembrane segment spans residues 305 to 325 (LLPAYALLMLIGVLGGFFVVP). Over 326 to 343 (LNALLQERGKKSVGAGNA) the chain is Cytoplasmic. The chain crosses the membrane as a helical span at residues 344 to 364 (IAVQNLGENSAMLLMLGIYSL). The Periplasmic portion of the chain corresponds to 365–366 (AV). Residues 367–387 (MVGIPVVPIGIGFGALFALAI) form a helical membrane-spanning segment. Over 388–397 (TALWIWQRRH) the chain is Cytoplasmic.

Belongs to the major facilitator superfamily. LplT (TC 2.A.1.42) family.

Its subcellular location is the cell inner membrane. Catalyzes the facilitated diffusion of 2-acyl-glycero-3-phosphoethanolamine (2-acyl-GPE) into the cell. This is Lysophospholipid transporter LplT from Escherichia coli O81 (strain ED1a).